A 329-amino-acid chain; its full sequence is Malate dehydrogenase (329 aa).

12 to 18 contributes to the NAD(+) binding site; that stretch reads GAAGQIG. Residues arginine 95 and arginine 101 each contribute to the substrate site. NAD(+)-binding positions include asparagine 108, glutamine 115, and 132-134; that span reads VGN. Asparagine 134 and arginine 165 together coordinate substrate. Catalysis depends on histidine 190, which acts as the Proton acceptor.

This sequence belongs to the LDH/MDH superfamily. MDH type 2 family.

The enzyme catalyses (S)-malate + NAD(+) = oxaloacetate + NADH + H(+). Its function is as follows. Catalyzes the reversible oxidation of malate to oxaloacetate. This is Malate dehydrogenase from Bordetella avium (strain 197N).